We begin with the raw amino-acid sequence, 371 residues long: MAPKKKATTAAQKDRSKALDLAMAQIEKDFGKGAIMRLGDENRPPISAIPSGNIAINVALGIGGFPRGRVVEIYGPESSGKTTVALHAIAEAQKGGGIAAFIDAEHALDPEYAKALGVDTDALLVSQPDTGEQALEIADMLVRSGAIDMVVIDSVAALTPKAEIDGEMGDSHVGLQARLMSQALRKMTSALYQTGTTAIFINQLREKIGVMFGSPETTTGGKALKFYASVRCDIRRIQALKDGQDVVGNRTRLKIVKNKVSPPFKIAEFDILYGEGISREGSILDLGVDAGIIKKSGSWFTYEGEQLGQGKEKARDFLKSNPELAEQLDDRIMQELKVGPYAKAKDEPIADEDQPIDVVPNFDDQDVEPQN.

ATP is bound at residue 75–82; that stretch reads GPESSGKT. Residues 343–371 form a disordered region; that stretch reads KAKDEPIADEDQPIDVVPNFDDQDVEPQN.

The protein belongs to the RecA family.

It localises to the cytoplasm. In terms of biological role, can catalyze the hydrolysis of ATP in the presence of single-stranded DNA, the ATP-dependent uptake of single-stranded DNA by duplex DNA, and the ATP-dependent hybridization of homologous single-stranded DNAs. It interacts with LexA causing its activation and leading to its autocatalytic cleavage. The chain is Protein RecA from Corynebacterium urealyticum (strain ATCC 43042 / DSM 7109).